Consider the following 152-residue polypeptide: Snaclec lebecin subunit alpha (152 aa).

The signal sequence occupies residues 1-23 (MGRSISVSFGLLVVFLSLSGTGA). 3 disulfide bridges follow: Cys-27–Cys-38, Cys-54–Cys-147, and Cys-122–Cys-139. One can recognise a C-type lectin domain in the interval 34–148 (YEGGCYYVFD…CELAYHFICS (115 aa)).

In terms of assembly, heterodimer with the beta subunit (AC W5XCJ6); disulfide-linked. In terms of tissue distribution, expressed by the venom gland.

The protein localises to the secreted. Functionally, inhibits human breast cancer cells (MDA-MB231) migration and proliferation, as well as their adhesion to fibrinogen and fibronectin. This inhibition may be due to the binding to receptors of the integrin family, probably alpha-v/beta-3 (ITGAV/ITGB3) (40% inhibition of cell adhesion) and alpha-5/beta-1 (ITGA5/ITGB1) (by comparison with lebectin). The sequence is that of Snaclec lebecin subunit alpha from Macrovipera lebetinus (Levantine viper).